The primary structure comprises 444 residues: Tol-Pal system protein TolB (444 aa).

The N-terminal stretch at 1 to 19 (MRNIIYFILLLLFSFKGYA) is a signal peptide.

It belongs to the TolB family. In terms of assembly, the Tol-Pal system is composed of five core proteins: the inner membrane proteins TolA, TolQ and TolR, the periplasmic protein TolB and the outer membrane protein Pal. They form a network linking the inner and outer membranes and the peptidoglycan layer.

The protein resides in the periplasm. Part of the Tol-Pal system, which plays a role in outer membrane invagination during cell division and is important for maintaining outer membrane integrity. The chain is Tol-Pal system protein TolB from Rickettsia akari (strain Hartford).